The sequence spans 500 residues: L-arabinose isomerase (500 aa).

Glutamate 306, glutamate 333, histidine 350, and histidine 450 together coordinate Mn(2+).

It belongs to the arabinose isomerase family. As to quaternary structure, homohexamer. Mn(2+) is required as a cofactor.

The enzyme catalyses beta-L-arabinopyranose = L-ribulose. It functions in the pathway carbohydrate degradation; L-arabinose degradation via L-ribulose; D-xylulose 5-phosphate from L-arabinose (bacterial route): step 1/3. Functionally, catalyzes the conversion of L-arabinose to L-ribulose. The chain is L-arabinose isomerase from Escherichia coli O17:K52:H18 (strain UMN026 / ExPEC).